Reading from the N-terminus, the 142-residue chain is Large ribosomal subunit protein uL16 (142 aa).

It belongs to the universal ribosomal protein uL16 family. Part of the 50S ribosomal subunit.

Functionally, binds 23S rRNA and is also seen to make contacts with the A and possibly P site tRNAs. The protein is Large ribosomal subunit protein uL16 of Phenylobacterium zucineum (strain HLK1).